We begin with the raw amino-acid sequence, 192 residues long: Secreted phosphoprotein 24 (192 aa).

Residues 1 to 29 (MGKTPEDFERHTMRSLIFVLALSVFTCSG) form the signal peptide. Intrachain disulfides connect cysteine 92-cysteine 103 and cysteine 116-cysteine 134. Residues 155–192 (TDPRKRGSSRSEAFSSRGRGHSNGDWRKPDYTSPGKVE) form a disordered region.

Belongs to the SPP2 family. In terms of processing, multiply phosphorylated at serine residues.

It is found in the secreted. Could coordinate an aspect of bone turnover. In Gallus gallus (Chicken), this protein is Secreted phosphoprotein 24 (SPP2).